We begin with the raw amino-acid sequence, 331 residues long: Glucokinase (331 aa).

Residue 16 to 21 (GDIGGT) coordinates ATP.

It belongs to the bacterial glucokinase family.

Its subcellular location is the cytoplasm. It carries out the reaction D-glucose + ATP = D-glucose 6-phosphate + ADP + H(+). This is Glucokinase from Pseudomonas aeruginosa (strain UCBPP-PA14).